The primary structure comprises 271 residues: Putative hydro-lyase blr2921 (271 aa).

It belongs to the D-glutamate cyclase family.

The protein is Putative hydro-lyase blr2921 of Bradyrhizobium diazoefficiens (strain JCM 10833 / BCRC 13528 / IAM 13628 / NBRC 14792 / USDA 110).